A 103-amino-acid chain; its full sequence is Small ribosomal subunit protein uS10 (103 aa).

The protein belongs to the universal ribosomal protein uS10 family. As to quaternary structure, part of the 30S ribosomal subunit.

Functionally, involved in the binding of tRNA to the ribosomes. This Pectobacterium atrosepticum (strain SCRI 1043 / ATCC BAA-672) (Erwinia carotovora subsp. atroseptica) protein is Small ribosomal subunit protein uS10.